The primary structure comprises 110 residues: Early nodulin-12A (110 aa).

Positions 1–24 are cleaved as a signal peptide; that stretch reads MASFFLSSLVLFLAALILVPQGLA. Positions 31 to 110 are disordered; it reads VYEPPVNGPP…HPTEEHNIHF (80 aa). Positions 32-43 are enriched in pro residues; the sequence is YEPPVNGPPVNK. 3 repeat units span residues 34–38, 39–43, and 44–48. The segment at 34–88 is 11 X 5 AA approximate tandem repeats of P-P-[VQRH]-[NKH]-[GKE]; it reads PPVNGPPVNKPPQKETPVHKPPQKETPVHKPPQKEPPRHKPPQKEPPRHKPPHKK. Basic and acidic residues predominate over residues 45-81; that stretch reads PQKETPVHKPPQKETPVHKPPQKEPPRHKPPQKEPPR. One copy of the 4; approximate repeat lies at 49-53; the sequence is TPVHK. Repeat 5 spans residues 54 to 58; it reads PPQKE. Residues 59 to 63 form a 6; approximate repeat; that stretch reads TPVHK. 5 repeat units span residues 64-68, 69-73, 74-78, 79-83, and 84-88. Over residues 82–93 the composition is skewed to basic residues; it reads HKPPHKKSHLHV. Residues 101–110 are compositionally biased toward basic and acidic residues; that stretch reads HPTEEHNIHF.

The protein belongs to the plant proline-rich protein superfamily. ENOD12 family. In terms of tissue distribution, root nodules, stem and flower.

The protein localises to the secreted. The protein resides in the cell wall. Functionally, involved in the infection process during the plant-rhizobium interaction. The sequence is that of Early nodulin-12A (ENOD12A) from Pisum sativum (Garden pea).